The sequence spans 119 residues: Beta-2-microglobulin (119 aa).

Residues 1 to 20 (MAPFVAIALLVLLSLSGLEA) form the signal peptide. The Ig-like C1-type domain maps to 25 to 114 (PKIQVYSRHP…VTFSTPKTVK (90 aa)). Cys-45 and Cys-100 are joined by a disulfide.

It belongs to the beta-2-microglobulin family. Heterodimer of an alpha chain and a beta chain. Beta-2-microglobulin is the beta-chain of major histocompatibility complex class I molecules.

Its subcellular location is the secreted. In terms of biological role, component of the class I major histocompatibility complex (MHC). Involved in the presentation of peptide antigens to the immune system. The chain is Beta-2-microglobulin (B2M) from Cheracebus torquatus (Collared titi monkey).